We begin with the raw amino-acid sequence, 1129 residues long: Ubiquitin carboxyl-terminal hydrolase 7 (1129 aa).

The region spanning 29-169 (EGHLALDIER…DDVIRLRCRF (141 aa)) is the MATH domain. The region spanning 190 to 500 (IGLRNQGATC…SAYMLVYVRD (311 aa)) is the USP domain. The active-site Nucleophile is cysteine 199. Histidine 439 serves as the catalytic Proton acceptor.

The protein belongs to the peptidase C19 family.

The protein resides in the nucleus. The catalysed reaction is Thiol-dependent hydrolysis of ester, thioester, amide, peptide and isopeptide bonds formed by the C-terminal Gly of ubiquitin (a 76-residue protein attached to proteins as an intracellular targeting signal).. In terms of biological role, hydrolase that deubiquitinates target proteins. The protein is Ubiquitin carboxyl-terminal hydrolase 7 of Caenorhabditis briggsae.